A 271-amino-acid polypeptide reads, in one-letter code: Neurexophilin-1 (271 aa).

An N-terminal signal peptide occupies residues 1–21; sequence MQAACWYVLLLLQPTVYLVTC. Residues 22–97 are II; the sequence is ANLTNGGKSE…WDWLRNSTDL (76 aa). N23, N68, N93, N146, N156, and N162 each carry an N-linked (GlcNAc...) asparagine glycan. The tract at residues 98–176 is III; that stretch reads QEPRPRAKRR…LVPPTKIVEF (79 aa). Positions 177–185 are IV (linker domain); that stretch reads DLAQQTVID. The segment at 186–271 is v (Cys-rich); sequence AKDSKSFNCR…HSDTPYFPSG (86 aa).

This sequence belongs to the neurexophilin family. Post-translationally, may be proteolytically processed at the boundary between the N-terminal non-conserved and the central conserved domain in neuron-like cells. In terms of tissue distribution, highest level in brain.

The protein localises to the secreted. Its function is as follows. May be signaling molecules that resemble neuropeptides. Ligand for alpha-neurexins. The chain is Neurexophilin-1 (Nxph1) from Rattus norvegicus (Rat).